Consider the following 215-residue polypeptide: Adenylate kinase (215 aa).

Position 10 to 15 (glycine 10 to threonine 15) interacts with ATP. Residues serine 30 to valine 59 are NMP. Residues threonine 31, arginine 36, glutamate 57–valine 59, glycine 86–arginine 89, and glutamine 93 contribute to the AMP site. Residues glycine 127–aspartate 165 form an LID region. Arginine 128 provides a ligand contact to ATP. Residues cysteine 131 and cysteine 134 each coordinate Zn(2+). ATP is bound at residue threonine 137 to tyrosine 138. Positions 151 and 154 each coordinate Zn(2+). AMP-binding residues include arginine 162 and arginine 173. Glutamine 201 serves as a coordination point for ATP.

This sequence belongs to the adenylate kinase family. Monomer.

It localises to the cytoplasm. It catalyses the reaction AMP + ATP = 2 ADP. It participates in purine metabolism; AMP biosynthesis via salvage pathway; AMP from ADP: step 1/1. In terms of biological role, catalyzes the reversible transfer of the terminal phosphate group between ATP and AMP. Plays an important role in cellular energy homeostasis and in adenine nucleotide metabolism. This Lactococcus lactis subsp. lactis (strain IL1403) (Streptococcus lactis) protein is Adenylate kinase.